A 254-amino-acid polypeptide reads, in one-letter code: Large ribosomal subunit protein uL4 (254 aa).

Belongs to the universal ribosomal protein uL4 family. Part of the 50S ribosomal subunit.

In terms of biological role, one of the primary rRNA binding proteins, this protein initially binds near the 5'-end of the 23S rRNA. It is important during the early stages of 50S assembly. It makes multiple contacts with different domains of the 23S rRNA in the assembled 50S subunit and ribosome. Functionally, forms part of the polypeptide exit tunnel. The chain is Large ribosomal subunit protein uL4 from Methanothermobacter thermautotrophicus (strain ATCC 29096 / DSM 1053 / JCM 10044 / NBRC 100330 / Delta H) (Methanobacterium thermoautotrophicum).